We begin with the raw amino-acid sequence, 273 residues long: 2,3,4,5-tetrahydropyridine-2,6-dicarboxylate N-succinyltransferase (273 aa).

Arginine 104 and aspartate 141 together coordinate substrate.

It belongs to the transferase hexapeptide repeat family. In terms of assembly, homotrimer.

The protein localises to the cytoplasm. The enzyme catalyses (S)-2,3,4,5-tetrahydrodipicolinate + succinyl-CoA + H2O = (S)-2-succinylamino-6-oxoheptanedioate + CoA. It functions in the pathway amino-acid biosynthesis; L-lysine biosynthesis via DAP pathway; LL-2,6-diaminopimelate from (S)-tetrahydrodipicolinate (succinylase route): step 1/3. In Psychrobacter cryohalolentis (strain ATCC BAA-1226 / DSM 17306 / VKM B-2378 / K5), this protein is 2,3,4,5-tetrahydropyridine-2,6-dicarboxylate N-succinyltransferase.